The primary structure comprises 365 residues: Genome polyprotein (365 aa).

Disordered regions lie at residues 56-136 (VDAG…AGTT) and 334-365 (GNVGETQENTERHTAGDVSRNMHSLLGVQQHH). The segment covering 68 to 98 (GTQPPATGAAAQGGAQPPATGAAAQPPTTQG) has biased composition (low complexity). Residues 105–123 (GATGGGGAQTGAGGTGSVT) are compositionally biased toward gly residues.

The protein belongs to the potyviridae genome polyprotein family. Post-translationally, genome polyprotein of potyviruses undergoes post-translational proteolytic processing by the main proteinase NIa-pro resulting in the production of at least ten individual proteins. The P1 proteinase and the HC-pro cleave only their respective C-termini autocatalytically. 6K1 is essential for proper proteolytic separation of P3 from CI.

It localises to the virion. It catalyses the reaction RNA(n) + a ribonucleoside 5'-triphosphate = RNA(n+1) + diphosphate. An RNA-dependent RNA polymerase that plays an essential role in the virus replication. Functionally, involved in aphid transmission, cell-to-cell and systemis movement, encapsidation of the viral RNA and in the regulation of viral RNA amplification. The polypeptide is Genome polyprotein (Eleusine (Sorghum)).